The following is a 115-amino-acid chain: Hydrogenase maturation factor HypA (115 aa).

His-2 contacts Ni(2+). Cys-73, Cys-76, Cys-89, and Cys-92 together coordinate Zn(2+).

This sequence belongs to the HypA/HybF family.

Involved in the maturation of [NiFe] hydrogenases. Required for nickel insertion into the metal center of the hydrogenase. The sequence is that of Hydrogenase maturation factor HypA from Parabacteroides distasonis (strain ATCC 8503 / DSM 20701 / CIP 104284 / JCM 5825 / NCTC 11152).